We begin with the raw amino-acid sequence, 150 residues long: Macrodomain Ter protein (150 aa).

This sequence belongs to the MatP family. As to quaternary structure, homodimer.

It is found in the cytoplasm. Required for spatial organization of the terminus region of the chromosome (Ter macrodomain) during the cell cycle. Prevents early segregation of duplicated Ter macrodomains during cell division. Binds specifically to matS, which is a 13 bp signature motif repeated within the Ter macrodomain. This is Macrodomain Ter protein from Escherichia coli (strain SMS-3-5 / SECEC).